Reading from the N-terminus, the 70-residue chain is Phycocyanin-645 alpha-2 chain (70 aa).

Arginine 16 contributes to the (2R,3E)-phycocyanobilin binding site. Mesobiliverdin is bound by residues cysteine 18, tyrosine 26, and lysine 41.

Belongs to the phycoerythrin family. In terms of assembly, heterotetramer of 2 different alpha chains and 2 identical beta chains which form 2 alpha-beta heterodimers within the heterotetramer. In terms of processing, contains one phycocyanobilin chromophore, one mesobiliverdin chromophore and one 15,16-dihydrobiliverdin chromophore with binding mediated by both the alpha and beta subunits.

It localises to the plastid. The protein localises to the chloroplast thylakoid membrane. Light-harvesting photosynthetic tetrapyrrole chromophore-protein from the phycobiliprotein complex. The sequence is that of Phycocyanin-645 alpha-2 chain from Chroomonas sp.